The sequence spans 286 residues: Glycine--tRNA ligase alpha subunit (286 aa).

This sequence belongs to the class-II aminoacyl-tRNA synthetase family. As to quaternary structure, tetramer of two alpha and two beta subunits.

The protein resides in the cytoplasm. It catalyses the reaction tRNA(Gly) + glycine + ATP = glycyl-tRNA(Gly) + AMP + diphosphate. The sequence is that of Glycine--tRNA ligase alpha subunit from Thermotoga petrophila (strain ATCC BAA-488 / DSM 13995 / JCM 10881 / RKU-1).